A 500-amino-acid chain; its full sequence is Potassium/proton antiporter CemA (500 aa).

A helical membrane pass occupies residues 129 to 149 (LFLTTIKTIFILFFVPFLVNF). Residues 204–354 (HQTHRDSKPL…GSLDSIKNKD (151 aa)) form an insert region. The next 3 helical transmembrane spans lie at 378–398 (ITNF…LITL), 425–445 (ILLI…ELFF), and 461–481 (IFLL…YLIF).

Belongs to the CemA family.

The protein localises to the plastid. The protein resides in the chloroplast inner membrane. It catalyses the reaction K(+)(in) + H(+)(out) = K(+)(out) + H(+)(in). Contributes to K(+)/H(+) antiport activity by supporting proton efflux to control proton extrusion and homeostasis in chloroplasts in a light-dependent manner to modulate photosynthesis. Prevents excessive induction of non-photochemical quenching (NPQ) under continuous-light conditions. Indirectly promotes efficient inorganic carbon uptake into chloroplasts. The sequence is that of Potassium/proton antiporter CemA from Chlamydomonas reinhardtii (Chlamydomonas smithii).